Reading from the N-terminus, the 1810-residue chain is Trinucleotide repeat-containing gene 6B protein (1810 aa).

Over residues 1–22 (MQTNEGEVEEESSSQVEQEDFV) the composition is skewed to acidic residues. Disordered stretches follow at residues 1–221 (MQTN…PNPI), 235–1080 (EEWP…KKQM), 1141–1196 (MRKD…SSPG), and 1293–1329 (ALQQ…NMVP). Positions 33–75 (GEESKQEKEQEREEQLMEDKKRKKEDKKKKEATQKVTEQKTKV) form a coiled coil. 2 stretches are compositionally biased toward basic and acidic residues: residues 34 to 52 (EESK…MEDK) and 60 to 77 (KKKE…KVPE). The segment at 37 to 1028 (KQEKEQEREE…AMKPNSKSMQ (992 aa)) is interaction with argonaute proteins. The span at 88–106 (AASPIGSSPSPPVNGGNNA) shows a compositional bias: low complexity. A compositionally biased stretch (basic and acidic residues) spans 123 to 139 (MPREVPPRFRCQQDHKV). Residues 165 to 174 (APGANPNNNA) show a composition bias toward low complexity. Residues 180–190 (LLQSESGTAPE) are compositionally biased toward polar residues. Composition is skewed to low complexity over residues 207-220 (GPGA…SPNP) and 248-260 (SSEN…SASN). Polar residues-rich tracts occupy residues 261–290 (PGSE…SGNE) and 306–327 (QPPN…TSGQ). Low complexity-rich tracts occupy residues 335–346 (GFSNFNPNSNPS), 363–380 (ETES…GQAS), and 416–425 (NSLNLSSPNP). The segment covering 438–451 (GNTSRSTDAPSQST) has biased composition (polar residues). Low complexity predominate over residues 475 to 486 (SGQSNSGNNGNN). Polar residues-rich tracts occupy residues 504–528 (GSKS…PQDN), 564–575 (GPNQPNSSTGAW), 611–623 (TGSN…SDSH), and 655–667 (LSNT…QIKQ). Residues 675–688 (EVPRPEGKSDKGTE) show a composition bias toward basic and acidic residues. 2 stretches are compositionally biased toward polar residues: residues 774–783 (QPNQGWTSGK) and 793–804 (VKNNNWESSANK). A compositionally biased stretch (gly residues) spans 809–824 (WGEGGQNEIGTWGNGG). Positions 846–857 (TGRQPNSWNKQH) are enriched in polar residues. Serine 913 carries the phosphoserine modification. Composition is skewed to polar residues over residues 934 to 950 (NSYN…NSQG), 964 to 975 (TGKSASVWSKST), 1004 to 1027 (ASTT…SKSM), 1057 to 1072 (TAGS…SASW), and 1175 to 1195 (GNST…SSSP). The silencing domain; interaction with CNOT1 and PAN3 stretch occupies residues 1191-1700 (LSSSPGLRAQ…LAEFATEDEV (510 aa)). Positions 1295 to 1307 (QQQQQQQQQQQRQ) are enriched in low complexity. Serine 1409 is modified (phosphoserine). Residue threonine 1426 is modified to Phosphothreonine. A Phosphoserine modification is found at serine 1438. Residue threonine 1441 is modified to Phosphothreonine. Positions 1449–1467 (SNASWPPEFQPGVPWKGIQ) are PABPC1-interacting motif-2 (PAM2). The tract at residues 1568-1619 (SSRNTTPLTRPPPGLTNPKPASPWSSTAPRSVRGWGTQDSRIASASTWSDGG) is disordered. The span at 1604-1617 (TQDSRIASASTWSD) shows a compositional bias: polar residues. In terms of domain architecture, RRM spans 1625–1697 (YWLVLHNLTP…TTILAEFATE (73 aa)). Disordered regions lie at residues 1706–1740 (QAQP…GPAL) and 1786–1810 (EDPH…SDSI). Residues 1722–1733 (GWQSLETSQNQA) are compositionally biased toward polar residues. Over residues 1792-1801 (GSPAPLLPGD) the composition is skewed to low complexity. Phosphoserine is present on residues serine 1793 and serine 1809.

The protein belongs to the GW182 family. In terms of assembly, interacts with AGO1, AGO2, AGO3 and AGO4. Interacts with CNOT1; the interaction mediates the association with the CCR4-NOT complex. Interacts with PAN3; the interaction mediates the association with the PAN complex. Interacts with MOV10; the interaction is direct and RNA-dependent.

It is found in the cytoplasm. The protein resides in the P-body. Plays a role in RNA-mediated gene silencing by both micro-RNAs (miRNAs) and short interfering RNAs (siRNAs). Required for miRNA-dependent translational repression and siRNA-dependent endonucleolytic cleavage of complementary mRNAs by argonaute family proteins. As scaffolding protein associates with argonaute proteins bound to partially complementary mRNAs and simultaneously can recruit CCR4-NOT and PAN deadenylase complexes. This is Trinucleotide repeat-containing gene 6B protein (Tnrc6b) from Mus musculus (Mouse).